Consider the following 128-residue polypeptide: UPF0102 protein GSU0650 (128 aa).

This sequence belongs to the UPF0102 family.

The protein is UPF0102 protein GSU0650 of Geobacter sulfurreducens (strain ATCC 51573 / DSM 12127 / PCA).